The sequence spans 264 residues: S-adenosylmethionine decarboxylase proenzyme (264 aa).

Catalysis depends on Ser113, which acts as the Schiff-base intermediate with substrate; via pyruvic acid. A Pyruvic acid (Ser); by autocatalysis modification is found at Ser113. The active-site Proton acceptor; for processing activity is the His118. Cys141 (proton donor; for catalytic activity) is an active-site residue.

The protein belongs to the prokaryotic AdoMetDC family. Type 2 subfamily. In terms of assembly, heterooctamer of four alpha and four beta chains arranged as a tetramer of alpha/beta heterodimers. Pyruvate serves as cofactor. Is synthesized initially as an inactive proenzyme. Formation of the active enzyme involves a self-maturation process in which the active site pyruvoyl group is generated from an internal serine residue via an autocatalytic post-translational modification. Two non-identical subunits are generated from the proenzyme in this reaction, and the pyruvate is formed at the N-terminus of the alpha chain, which is derived from the carboxyl end of the proenzyme. The post-translation cleavage follows an unusual pathway, termed non-hydrolytic serinolysis, in which the side chain hydroxyl group of the serine supplies its oxygen atom to form the C-terminus of the beta chain, while the remainder of the serine residue undergoes an oxidative deamination to produce ammonia and the pyruvoyl group blocking the N-terminus of the alpha chain.

It carries out the reaction S-adenosyl-L-methionine + H(+) = S-adenosyl 3-(methylsulfanyl)propylamine + CO2. It functions in the pathway amine and polyamine biosynthesis; S-adenosylmethioninamine biosynthesis; S-adenosylmethioninamine from S-adenosyl-L-methionine: step 1/1. Its function is as follows. Catalyzes the decarboxylation of S-adenosylmethionine to S-adenosylmethioninamine (dcAdoMet), the propylamine donor required for the synthesis of the polyamines spermine and spermidine from the diamine putrescine. This Xanthomonas campestris pv. campestris (strain B100) protein is S-adenosylmethionine decarboxylase proenzyme.